The primary structure comprises 444 residues: Divalent metal cation transporter MntH (444 aa).

11 helical membrane passes run 31–51, 68–88, 115–135, 146–166, 175–195, 212–232, 267–287, 303–323, 356–376, 381–401, and 413–433; these read GGHW…VSVG, FGYL…VLQG, LALW…EVIG, IPLT…LLLM, AFVM…IALA, VVTN…TVMP, VALM…AAVF, ALLA…VALL, LLTR…YGEA, LLVL…IPLV, and LVAP…IVGL.

This sequence belongs to the NRAMP family.

The protein resides in the cell inner membrane. Functionally, h(+)-stimulated, divalent metal cation uptake system. The sequence is that of Divalent metal cation transporter MntH from Xanthomonas campestris pv. campestris (strain ATCC 33913 / DSM 3586 / NCPPB 528 / LMG 568 / P 25).